A 248-amino-acid chain; its full sequence is 4-hydroxy-tetrahydrodipicolinate reductase (248 aa).

Residues 9–14, 77–79, and 104–107 each bind NAD(+); these read GAKGRV, GTT, and APNF. His-134 (proton donor/acceptor) is an active-site residue. His-135 contributes to the (S)-2,3,4,5-tetrahydrodipicolinate binding site. Lys-138 acts as the Proton donor in catalysis. 144-145 serves as a coordination point for (S)-2,3,4,5-tetrahydrodipicolinate; sequence GT.

This sequence belongs to the DapB family.

It is found in the cytoplasm. It carries out the reaction (S)-2,3,4,5-tetrahydrodipicolinate + NAD(+) + H2O = (2S,4S)-4-hydroxy-2,3,4,5-tetrahydrodipicolinate + NADH + H(+). The enzyme catalyses (S)-2,3,4,5-tetrahydrodipicolinate + NADP(+) + H2O = (2S,4S)-4-hydroxy-2,3,4,5-tetrahydrodipicolinate + NADPH + H(+). It participates in amino-acid biosynthesis; L-lysine biosynthesis via DAP pathway; (S)-tetrahydrodipicolinate from L-aspartate: step 4/4. Catalyzes the conversion of 4-hydroxy-tetrahydrodipicolinate (HTPA) to tetrahydrodipicolinate. This Corynebacterium glutamicum (strain ATCC 13032 / DSM 20300 / JCM 1318 / BCRC 11384 / CCUG 27702 / LMG 3730 / NBRC 12168 / NCIMB 10025 / NRRL B-2784 / 534) protein is 4-hydroxy-tetrahydrodipicolinate reductase.